The following is a 340-amino-acid chain: Ketol-acid reductoisomerase (NADP(+)) (340 aa).

The region spanning methionine 5–threonine 182 is the KARI N-terminal Rossmann domain. NADP(+)-binding positions include tyrosine 26–glutamine 29, arginine 49, serine 53, and aspartate 83–glutamine 86. Histidine 108 is an active-site residue. Glycine 134 is an NADP(+) binding site. In terms of domain architecture, KARI C-terminal knotted spans threonine 183 to valine 328. Mg(2+)-binding residues include aspartate 191, glutamate 195, glutamate 227, and glutamate 231. Residue serine 252 participates in substrate binding.

It belongs to the ketol-acid reductoisomerase family. Mg(2+) serves as cofactor.

It catalyses the reaction (2R)-2,3-dihydroxy-3-methylbutanoate + NADP(+) = (2S)-2-acetolactate + NADPH + H(+). The enzyme catalyses (2R,3R)-2,3-dihydroxy-3-methylpentanoate + NADP(+) = (S)-2-ethyl-2-hydroxy-3-oxobutanoate + NADPH + H(+). Its pathway is amino-acid biosynthesis; L-isoleucine biosynthesis; L-isoleucine from 2-oxobutanoate: step 2/4. It participates in amino-acid biosynthesis; L-valine biosynthesis; L-valine from pyruvate: step 2/4. Involved in the biosynthesis of branched-chain amino acids (BCAA). Catalyzes an alkyl-migration followed by a ketol-acid reduction of (S)-2-acetolactate (S2AL) to yield (R)-2,3-dihydroxy-isovalerate. In the isomerase reaction, S2AL is rearranged via a Mg-dependent methyl migration to produce 3-hydroxy-3-methyl-2-ketobutyrate (HMKB). In the reductase reaction, this 2-ketoacid undergoes a metal-dependent reduction by NADPH to yield (R)-2,3-dihydroxy-isovalerate. This Streptococcus sanguinis (strain SK36) protein is Ketol-acid reductoisomerase (NADP(+)).